We begin with the raw amino-acid sequence, 1155 residues long: RhoGEF domain-containing protein gxcJ (1155 aa).

Disordered stretches follow at residues 114–216 (ENNS…NFLK), 259–333 (LNKK…IPSN), 429–460 (LVSQ…DSLE), 484–508 (LNNE…TTTT), and 604–639 (SNSN…NNYQ). 3 stretches are compositionally biased toward low complexity: residues 115-153 (NNSI…TNNN), 161-211 (TITN…NNNN), and 260-303 (NKKS…NNNN). Residues 192 to 257 (NNNNNNNNNN…KDIEKLNSAL (66 aa)) are a coiled coil. Residues 304-319 (YKPTITSSQTQPSLME) are compositionally biased toward polar residues. Residues 320 to 330 (NSKDIDKKEKI) are compositionally biased toward basic and acidic residues. The segment covering 441 to 457 (FLASASSSSTTTITTTD) has biased composition (low complexity). Low complexity predominate over residues 604-637 (SNSNSSNNNNSNSNNITNSNSSSFSKKNSNNNNN). One can recognise a DH domain in the interval 700-874 (HRTNLIKEIL…EKIVGTINSQ (175 aa)). Positions 1084 to 1155 (SHRLSIPSTS…LVKSLVNIKT (72 aa)) are disordered. Composition is skewed to low complexity over residues 1093–1121 (SSPN…GSPN) and 1128–1137 (QQQQLQQQQQ).

Functionally, GTPase-activating protein. The polypeptide is RhoGEF domain-containing protein gxcJ (gxcJ) (Dictyostelium discoideum (Social amoeba)).